The chain runs to 380 residues: Crotonobetainyl-CoA reductase (380 aa).

Belongs to the acyl-CoA dehydrogenase family. As to quaternary structure, homotetramer. It depends on FAD as a cofactor.

The protein resides in the cytoplasm. The catalysed reaction is 4-(trimethylamino)butanoyl-CoA + oxidized [electron-transfer flavoprotein] + H(+) = crotonobetainyl-CoA + reduced [electron-transfer flavoprotein]. The protein operates within amine and polyamine metabolism; carnitine metabolism. In terms of biological role, catalyzes the reduction of crotonobetainyl-CoA to gamma-butyrobetainyl-CoA. This Salmonella typhi protein is Crotonobetainyl-CoA reductase.